Here is a 332-residue protein sequence, read N- to C-terminus: Fructose-1,6-bisphosphatase class 1 (332 aa).

Positions 89, 110, 112, and 113 each coordinate Mg(2+). Residues 113 to 116 (DGSS), asparagine 206, tyrosine 239, 257 to 259 (YLY), and lysine 269 each bind substrate. Glutamate 275 lines the Mg(2+) pocket.

Belongs to the FBPase class 1 family. Homotetramer. Mg(2+) serves as cofactor.

It localises to the cytoplasm. It catalyses the reaction beta-D-fructose 1,6-bisphosphate + H2O = beta-D-fructose 6-phosphate + phosphate. The protein operates within carbohydrate biosynthesis; gluconeogenesis. In Salmonella arizonae (strain ATCC BAA-731 / CDC346-86 / RSK2980), this protein is Fructose-1,6-bisphosphatase class 1.